Here is a 378-residue protein sequence, read N- to C-terminus: Homeobox protein Meis3 (378 aa).

Positions 24–57 are disordered; it reads FSEAAPSVPRAPGPYTPHRPPQLQAPGLDSDSLK. The segment covering 32-43 has biased composition (pro residues); it reads PRAPGPYTPHRP. The 84-residue stretch at 99–182 folds into the MEIS N-terminal domain; sequence GGDVCSSDSF…PIDLVIEDRD (84 aa). Positions 203–265 are disordered; the sequence is NTTWIRDHED…DEDLDLERRR (63 aa). Low complexity predominate over residues 230-244; the sequence is SQSGDNSSDQGDGLD. The homeobox; TALE-type DNA-binding region spans 265-327; the sequence is RNKKRGIFPK…NARRRIVQPM (63 aa).

Belongs to the TALE/MEIS homeobox family. As to expression, expressed at high levels in the brain. Significant expression also observed in the heart, spleen and lung. Expressed in pancreatic islets (beta-cells and non-beta-cells).

The protein resides in the nucleus. Transcriptional regulator which directly modulates PDPK1 expression, thus promoting survival of pancreatic beta-cells. Also regulates expression of NDFIP1, BNIP3, and CCNG1. In Mus musculus (Mouse), this protein is Homeobox protein Meis3 (Meis3).